Reading from the N-terminus, the 179-residue chain is uncharacterized protein (179 aa).

It localises to the plastid. The protein resides in the cyanelle. This is an uncharacterized protein from Cyanophora paradoxa.